A 637-amino-acid polypeptide reads, in one-letter code: 1-deoxy-D-xylulose-5-phosphate synthase (637 aa).

Thiamine diphosphate is bound by residues H82 and 123 to 125 (GHA). D154 provides a ligand contact to Mg(2+). Residues 155 to 156 (GS), N183, Y295, and E378 contribute to the thiamine diphosphate site. Residue N183 participates in Mg(2+) binding.

It belongs to the transketolase family. DXPS subfamily. In terms of assembly, homodimer. The cofactor is Mg(2+). Requires thiamine diphosphate as cofactor.

It catalyses the reaction D-glyceraldehyde 3-phosphate + pyruvate + H(+) = 1-deoxy-D-xylulose 5-phosphate + CO2. It functions in the pathway metabolic intermediate biosynthesis; 1-deoxy-D-xylulose 5-phosphate biosynthesis; 1-deoxy-D-xylulose 5-phosphate from D-glyceraldehyde 3-phosphate and pyruvate: step 1/1. Catalyzes the acyloin condensation reaction between C atoms 2 and 3 of pyruvate and glyceraldehyde 3-phosphate to yield 1-deoxy-D-xylulose-5-phosphate (DXP). The sequence is that of 1-deoxy-D-xylulose-5-phosphate synthase from Lawsonia intracellularis (strain PHE/MN1-00).